The sequence spans 224 residues: DNA mismatch repair protein MutH (224 aa).

Belongs to the MutH family.

It localises to the cytoplasm. Its function is as follows. Sequence-specific endonuclease that cleaves unmethylated GATC sequences. It is involved in DNA mismatch repair. The chain is DNA mismatch repair protein MutH from Histophilus somni (strain 129Pt) (Haemophilus somnus).